A 329-amino-acid polypeptide reads, in one-letter code: Fructose-1,6-bisphosphatase class 1 (329 aa).

Positions 84, 103, 105, and 106 each coordinate Mg(2+). Substrate contacts are provided by residues 106–109, N196, and K262; that span reads DGSS. E268 is a Mg(2+) binding site.

The protein belongs to the FBPase class 1 family. Homotetramer. Requires Mg(2+) as cofactor.

The protein resides in the cytoplasm. The catalysed reaction is beta-D-fructose 1,6-bisphosphate + H2O = beta-D-fructose 6-phosphate + phosphate. It functions in the pathway carbohydrate biosynthesis; gluconeogenesis. The polypeptide is Fructose-1,6-bisphosphatase class 1 (Shewanella loihica (strain ATCC BAA-1088 / PV-4)).